A 51-amino-acid chain; its full sequence is Large ribosomal subunit protein eL39 (51 aa).

The protein belongs to the eukaryotic ribosomal protein eL39 family. As to quaternary structure, interacts with YIH1.

This chain is Large ribosomal subunit protein eL39 (RPL39), found in Kluyveromyces lactis (strain ATCC 8585 / CBS 2359 / DSM 70799 / NBRC 1267 / NRRL Y-1140 / WM37) (Yeast).